A 134-amino-acid chain; its full sequence is Cytochrome b5 (134 aa).

The region spanning 6–82 is the Cytochrome b5 heme-binding domain; that stretch reads TKTFTRAEVA…MKKYKIGELV (77 aa). Heme is bound by residues histidine 41 and histidine 65. Residues 86 to 105 are disordered; sequence RTSVAQKSEPTWSTEQQTEE. Polar residues predominate over residues 87–105; that stretch reads TSVAQKSEPTWSTEQQTEE. The chain crosses the membrane as a helical span at residues 111 to 131; the sequence is WLVPLVLCLVATLFYKFFFGG.

It belongs to the cytochrome b5 family.

The protein localises to the endoplasmic reticulum membrane. It localises to the microsome membrane. Its function is as follows. Cytochrome b5 is a membrane-bound hemoprotein which functions as an electron carrier for several membrane-bound oxygenases. In Drosophila melanogaster (Fruit fly), this protein is Cytochrome b5 (Cyt-b5).